Consider the following 166-residue polypeptide: HTH-type transcriptional regulator PrsX (166 aa).

Residues 25 to 159 (EHLLMQLCIR…FEVINKKLLA (135 aa)) enclose the HTH marR-type domain.

Its subcellular location is the cytoplasm. The protein is HTH-type transcriptional regulator PrsX (prsX) of Escherichia coli O6:H1 (strain CFT073 / ATCC 700928 / UPEC).